The chain runs to 94 residues: Large ribosomal subunit protein bL25 (94 aa).

Belongs to the bacterial ribosomal protein bL25 family. Part of the 50S ribosomal subunit; part of the 5S rRNA/L5/L18/L25 subcomplex. Contacts the 5S rRNA. Binds to the 5S rRNA independently of L5 and L18.

In terms of biological role, this is one of the proteins that binds to the 5S RNA in the ribosome where it forms part of the central protuberance. The chain is Large ribosomal subunit protein bL25 from Escherichia coli O6:K15:H31 (strain 536 / UPEC).